The primary structure comprises 569 residues: Estrogen receptor (569 aa).

Positions M1–F151 are modulating. Polar residues predominate over residues P28–P37. Residues P28–S65 form a disordered region. 2 NR C4-type zinc fingers span residues C152 to C172 and C188 to C212. The nuclear receptor DNA-binding region spans C152–M217. The tract at residues M218–M278 is hinge. The tract at residues R223–G271 is disordered. Basic and acidic residues predominate over residues R237 to S247. Residues S279 to Q515 form the NR LBD domain. Residues V523–K532 are compositionally biased toward polar residues. Residues V523–P569 form a disordered region. Residues P538–P549 show a composition bias toward low complexity.

The protein belongs to the nuclear hormone receptor family. NR3 subfamily. In terms of assembly, binds DNA as a homodimer. Can form a heterodimer with ER-beta.

Its subcellular location is the nucleus. The steroid hormones and their receptors are involved in the regulation of eukaryotic gene expression and affect cellular proliferation and differentiation in target tissues. In Danio rerio (Zebrafish), this protein is Estrogen receptor (esr1).